The primary structure comprises 159 residues: Cyclic pyranopterin monophosphate synthase (159 aa).

Residues 75–77 (LCH) and 113–114 (ME) contribute to the substrate site. Residue Asp-128 is part of the active site.

Belongs to the MoaC family. In terms of assembly, homohexamer; trimer of dimers.

It carries out the reaction (8S)-3',8-cyclo-7,8-dihydroguanosine 5'-triphosphate = cyclic pyranopterin phosphate + diphosphate. Its pathway is cofactor biosynthesis; molybdopterin biosynthesis. In terms of biological role, catalyzes the conversion of (8S)-3',8-cyclo-7,8-dihydroguanosine 5'-triphosphate to cyclic pyranopterin monophosphate (cPMP). The sequence is that of Cyclic pyranopterin monophosphate synthase from Cereibacter sphaeroides (strain ATCC 17029 / ATH 2.4.9) (Rhodobacter sphaeroides).